A 205-amino-acid polypeptide reads, in one-letter code: Protease (205 aa).

Residues H54, D71, and C120 contribute to the active site.

Belongs to the peptidase C5 family. In terms of assembly, interacts with protease cofactor pVI-C; this interaction is necessary for protease activation.

The protein localises to the virion. It localises to the host nucleus. The enzyme catalyses Cleaves proteins of the adenovirus and its host cell at two consensus sites: -Yaa-Xaa-Gly-Gly-|-Xaa- and -Yaa-Xaa-Gly-Xaa-|-Gly- (in which Yaa is Met, Ile or Leu, and Xaa is any amino acid).. Its activity is regulated as follows. Requires DNA and protease cofactor for maximal activation. Inside nascent virions, becomes partially activated by binding to the viral DNA, allowing it to cleave the cofactor that binds to the protease and fully activates it. Actin, like the viral protease cofactor, seems to act as a cofactor in the cleavage of cytokeratin 18 and of actin itself. In terms of biological role, cleaves viral precursor proteins (pTP, pIIIa, pVI, pVII, pVIII, and pX) inside newly assembled particles giving rise to mature virions. Protease complexed to its cofactor slides along the viral DNA to specifically locate and cleave the viral precursors. Mature virions have a weakened organization compared to the unmature virions, thereby facilitating subsequent uncoating. Without maturation, the particle lacks infectivity and is unable to uncoat. Late in adenovirus infection, in the cytoplasm, may participate in the cytoskeleton destruction. Cleaves host cell cytoskeletal keratins K7 and K18. In Bos taurus (Bovine), this protein is Protease.